A 585-amino-acid polypeptide reads, in one-letter code: Glycerol-3-phosphate dehydrogenase (585 aa).

Position 37 to 65 (37 to 65 (DVVVIGGGVVGSGCALDAATRGLKVALVE)) interacts with FAD.

The protein belongs to the FAD-dependent glycerol-3-phosphate dehydrogenase family. Requires FAD as cofactor.

It localises to the cytoplasm. The catalysed reaction is a quinone + sn-glycerol 3-phosphate = dihydroxyacetone phosphate + a quinol. The polypeptide is Glycerol-3-phosphate dehydrogenase (glpD) (Mycobacterium leprae (strain TN)).